Here is a 280-residue protein sequence, read N- to C-terminus: Four and a half LIM domains protein 1 (280 aa).

Ser-2 carries the post-translational modification N-acetylserine. Lys-4 is subject to N6-acetyllysine. Residues 7–31 (CHYCRDPLQGKKYVQKDGRHCCLKC) form a C4-type zinc finger. LIM zinc-binding domains are found at residues 40–92 (CVEC…CNKC), 101–153 (CKGC…CVTC), 162–212 (CVKC…CVDC), and 221–276 (CAGC…CPDC). Lys-86 participates in a covalent cross-link: Glycyl lysine isopeptide (Lys-Gly) (interchain with G-Cter in SUMO2).

The protein localises to the cytoplasm. May have an involvement in muscle development or hypertrophy. Isoform 2 binds to RBP-J and plays a negative regulatory role in the RBP-J-mediated transcription in mammalian systems. The polypeptide is Four and a half LIM domains protein 1 (Fhl1) (Rattus norvegicus (Rat)).